Here is a 541-residue protein sequence, read N- to C-terminus: Chaperonin GroEL (541 aa).

ATP contacts are provided by residues 29-32, lysine 50, 86-90, glycine 416, and aspartate 498; these read TAGP and DGTTT.

The protein belongs to the chaperonin (HSP60) family. Forms a cylinder of 14 subunits composed of two heptameric rings stacked back-to-back. Interacts with the co-chaperonin GroES.

It localises to the cytoplasm. It catalyses the reaction ATP + H2O + a folded polypeptide = ADP + phosphate + an unfolded polypeptide.. Its function is as follows. Together with its co-chaperonin GroES, plays an essential role in assisting protein folding. The GroEL-GroES system forms a nano-cage that allows encapsulation of the non-native substrate proteins and provides a physical environment optimized to promote and accelerate protein folding. The protein is Chaperonin GroEL of Anaplasma phagocytophilum (Ehrlichia phagocytophila).